A 408-amino-acid polypeptide reads, in one-letter code: LL-diaminopimelate aminotransferase (408 aa).

Substrate contacts are provided by tyrosine 15 and glycine 42. Residues tyrosine 72, 108–109, tyrosine 132, asparagine 187, tyrosine 218, and 246–248 contribute to the pyridoxal 5'-phosphate site; these read SK and SFS. Residues lysine 109, tyrosine 132, and asparagine 187 each coordinate substrate. Lysine 249 carries the N6-(pyridoxal phosphate)lysine modification. Residues arginine 257 and asparagine 292 each coordinate pyridoxal 5'-phosphate. 2 residues coordinate substrate: asparagine 292 and arginine 388.

This sequence belongs to the class-I pyridoxal-phosphate-dependent aminotransferase family. LL-diaminopimelate aminotransferase subfamily. Homodimer. Requires pyridoxal 5'-phosphate as cofactor.

It carries out the reaction (2S,6S)-2,6-diaminopimelate + 2-oxoglutarate = (S)-2,3,4,5-tetrahydrodipicolinate + L-glutamate + H2O + H(+). The protein operates within amino-acid biosynthesis; L-lysine biosynthesis via DAP pathway; LL-2,6-diaminopimelate from (S)-tetrahydrodipicolinate (aminotransferase route): step 1/1. Functionally, involved in the synthesis of meso-diaminopimelate (m-DAP or DL-DAP), required for both lysine and peptidoglycan biosynthesis. Catalyzes the direct conversion of tetrahydrodipicolinate to LL-diaminopimelate. The chain is LL-diaminopimelate aminotransferase from Leptospira borgpetersenii serovar Hardjo-bovis (strain JB197).